A 239-amino-acid polypeptide reads, in one-letter code: DNA repair protein RecO (239 aa).

The protein belongs to the RecO family.

Its function is as follows. Involved in DNA repair and RecF pathway recombination. The chain is DNA repair protein RecO from Glaesserella parasuis serovar 5 (strain SH0165) (Haemophilus parasuis).